Here is a 339-residue protein sequence, read N- to C-terminus: MSTVHEILSKLSLEGDHSLPPSAYATVKAYSNFDADRDAAALEAAIKTKGVDEVTIINILTNRSNEQRQDIAFAYQRRTKKELSAALKSALSGHLEAVILGLLKTPSQYDASELKAAMKGLGTDEDTLIEIICSRTNQELNEINRVYREMYKTELEKDIISDTSGDFRKLMVALAKGKRCEDTSVIDYELIDQDARELYDAGVKRKGTDVPKWINIMTERSVPHLQKVFERYKSYSPYDMLESIKKEVKGDLENAFLNLVQCIQNKQLYFADRLYDSMKGKGTRDKVLIRIMVSRCEVDMLKIKSEFKRKYGKSLYYFIQQDTKGDYQRALLNLCGGED.

Residue Ser2 is modified to N-acetylserine. Residues 2-24 form an S100A10-binding site region; sequence STVHEILSKLSLEGDHSLPPSAY. Phosphotyrosine; by SRC is present on Tyr24. Residue Thr26 is modified to Phosphothreonine; by PKC. 4 Annexin repeats span residues 33-104, 105-176, 189-261, and 265-336; these read FDAD…GLLK, TPSQ…ALAK, ELID…NLVQ, and NKQL…NLCG.

It belongs to the annexin family. In terms of assembly, heterotetramer containing 2 light chains of S100A10/p11 and 2 heavy chains of ANXA2/p36.

It is found in the secreted. It localises to the extracellular space. Its subcellular location is the extracellular matrix. The protein resides in the basement membrane. Calcium-regulated membrane-binding protein whose affinity for calcium is greatly enhanced by anionic phospholipids. It binds two calcium ions with high affinity. In Gallus gallus (Chicken), this protein is Annexin A2 (ANXA2).